A 514-amino-acid polypeptide reads, in one-letter code: MHTNKKYLHTSGDESVLKGYKPVIGLEIHAQIKSKSKLFSTSSTEFTNSMPNVNVTLFDASFPGTLPSLNEYCIRQAVKTGLAVGGKINLYSQFDRKHYFYPDLPLGYQITQQFYPLVSEGKLRIDIPQGDGTYKPKYIRIARIQVEQDSGKSVHDLDNTLIDLNRAGNPLMEIITYPDLNSSLEAELFVKKLQFMLRHIGTCDGNMEEGSLRCDVNVSVYNASAGDHPLSGTRCEVKNISSANNIPRAIDFEIKRHIELLTNGQKIEQQTRTFDAKKGETLLLRSKENIPDYKFFPDPDLPYVELTEDYVESVKTTIPSLPDDIVEKLTSEPYNLNFYDANILLTNNGGVEFFETILHDSRWSSKLNPKLVANWIASELMGLLNASEITLSDSPVSYIQIGSIVEAIQHEDISGKMAKKIIKIMFDEKSGEMALDIAEKNGWRQITDKNVIGELCDKIIAEHPTEVGNLRNGKENVFQFLVAQVIKLSKGNASPSLVNQILREKATNKPTTTD.

It belongs to the GatB/GatE family. GatB subfamily. In terms of assembly, subunit of the heterotrimeric GatCAB amidotransferase (AdT) complex, composed of A, B and C subunits.

It localises to the mitochondrion. The catalysed reaction is L-glutamyl-tRNA(Gln) + L-glutamine + ATP + H2O = L-glutaminyl-tRNA(Gln) + L-glutamate + ADP + phosphate + H(+). Its function is as follows. Allows the formation of correctly charged Gln-tRNA(Gln) through the transamidation of misacylated Glu-tRNA(Gln) in the mitochondria. The reaction takes place in the presence of glutamine and ATP through an activated gamma-phospho-Glu-tRNA(Gln). The polypeptide is Glutamyl-tRNA(Gln) amidotransferase subunit B, mitochondrial (Naegleria gruberi (Amoeba)).